The chain runs to 1091 residues: ATPase family AAA domain-containing protein 2 (1091 aa).

The segment at 32-211 is disordered; the sequence is LEDLGVFNET…HFERRRKRSR (180 aa). Basic and acidic residues predominate over residues 53 to 62; sequence KQKDIQRTDE. Residues 74–119 are compositionally biased toward acidic residues; sequence SSEEGEDQEHEDDGEDEDDEDEDDDDDDDDDDDDDEDDEDEEDGEE. Lys148 is covalently cross-linked (Glycyl lysine isopeptide (Lys-Gly) (interchain with G-Cter in SUMO2)). Phosphoserine occurs at positions 158, 168, 173, and 241. Residue 298–305 participates in ATP binding; it reads GPPGTGKT. 2 positions are modified to phosphoserine: Ser577 and Ser582. 2 coiled-coil regions span residues 801–825 and 917–943; these read LTAE…IFLR and YAII…KKRG. The 113-residue stretch at 811–923 folds into the Bromo domain; sequence EQEEDTFREL…DTAYAIIKEE (113 aa). Lys959 is covalently cross-linked (Glycyl lysine isopeptide (Lys-Gly) (interchain with G-Cter in SUMO2)). Positions 961–985 are disordered; sequence NSTLVGDKRSDPEQNEKLKTPSTPV. Residues 966-979 are compositionally biased toward basic and acidic residues; sequence GDKRSDPEQNEKLK. The residue at position 970 (Ser970) is a Phosphoserine. Residue Lys979 forms a Glycyl lysine isopeptide (Lys-Gly) (interchain with G-Cter in SUMO2) linkage. Thr980 and Thr983 each carry phosphothreonine. Position 1003 is a phosphoserine (Ser1003). Thr1024 bears the Phosphothreonine mark.

Belongs to the AAA ATPase family. As to quaternary structure, interaction with ESR1 and NCOA3 is enhanced by estradiol. Interacts with acetylated lysine residues on histone H1.4, H2A, H2B and H3 (in vitro).

It is found in the nucleus. It catalyses the reaction ATP + H2O = ADP + phosphate + H(+). May be a transcriptional coactivator of the nuclear receptor ESR1 required to induce the expression of a subset of estradiol target genes, such as CCND1, MYC and E2F1. May play a role in the recruitment or occupancy of CREBBP at some ESR1 target gene promoters. May be required for histone hyperacetylation. This is ATPase family AAA domain-containing protein 2 (ATAD2) from Pongo abelii (Sumatran orangutan).